Here is a 178-residue protein sequence, read N- to C-terminus: Gamma-crystallin S (178 aa).

S2 is modified (N-acetylserine). The segment at 2-5 (SKSV) is N-terminal arm. 2 Beta/gamma crystallin 'Greek key' domains span residues 6–44 (AKITFYDDKNFQGHHYECDSDCPDFHTYLSCCNSIRVTG) and 45–87 (GAWV…KVIH). Positions 88–93 (LSSGGQ) are connecting peptide. 2 Beta/gamma crystallin 'Greek key' domains span residues 94–134 (YKLQ…KVLD) and 135–177 (GVWV…RRIM).

The protein belongs to the beta/gamma-crystallin family. Monomer.

Its function is as follows. Crystallins are the dominant structural components of the vertebrate eye lens. The protein is Gamma-crystallin S (CRYGS) of Macropus fuliginosus (Western gray kangaroo).